The following is a 107-amino-acid chain: Urease subunit beta (107 aa).

Belongs to the urease beta subunit family. In terms of assembly, heterotrimer of UreA (gamma), UreB (beta) and UreC (alpha) subunits. Three heterotrimers associate to form the active enzyme.

The protein localises to the cytoplasm. The catalysed reaction is urea + 2 H2O + H(+) = hydrogencarbonate + 2 NH4(+). It functions in the pathway nitrogen metabolism; urea degradation; CO(2) and NH(3) from urea (urease route): step 1/1. This is Urease subunit beta from Teredinibacter turnerae (strain ATCC 39867 / T7901).